The chain runs to 229 residues: Heptaprenylglyceryl phosphate synthase (229 aa).

Lys-12 serves as a coordination point for sn-glycerol 1-phosphate. Residues Asp-14 and Ser-40 each coordinate Mg(2+). Sn-glycerol 1-phosphate contacts are provided by residues 159-164 (YLEYSG), Gly-189, and 209-210 (GN).

The protein belongs to the GGGP/HepGP synthase family. Group I subfamily. Homodimer. Mg(2+) is required as a cofactor.

The enzyme catalyses sn-glycerol 1-phosphate + all-trans-heptaprenyl diphosphate = 3-heptaprenyl-sn-glycero-1-phosphate + diphosphate. It participates in membrane lipid metabolism; glycerophospholipid metabolism. Functionally, prenyltransferase that catalyzes in vivo the transfer of the heptaprenyl moiety of heptaprenyl pyrophosphate (HepPP; 35 carbon atoms) to the C3 hydroxyl of sn-glycerol-1-phosphate (G1P), producing heptaprenylglyceryl phosphate (HepGP). This reaction is an ether-bond-formation step in the biosynthesis of archaea-type G1P-based membrane lipids found in Bacillales. The sequence is that of Heptaprenylglyceryl phosphate synthase from Bacillus mycoides (strain KBAB4) (Bacillus weihenstephanensis).